A 1486-amino-acid chain; its full sequence is Chromosome partition protein MukB (1486 aa).

34–41 (GGNGAGKS) is an ATP binding site. Coiled coils occupy residues 334 to 418 (SDHL…QYNQ), 444 to 480 (LETF…QAYQ), and 509 to 603 (RHLA…RAPV). The flexible hinge stretch occupies residues 666 to 783 (PGGSEDQRLN…EVPLFGRAAR (118 aa)). Coiled-coil stretches lie at residues 835 to 923 (EAEI…AKLE), 977 to 1115 (EMLS…TAKA), and 1209 to 1266 (VEAI…QNVS).

This sequence belongs to the SMC family. MukB subfamily. As to quaternary structure, homodimerization via its hinge domain. Binds to DNA via its C-terminal region. Interacts, and probably forms a ternary complex, with MukE and MukF via its C-terminal region. The complex formation is stimulated by calcium or magnesium. Interacts with tubulin-related protein FtsZ.

The protein localises to the cytoplasm. The protein resides in the nucleoid. Plays a central role in chromosome condensation, segregation and cell cycle progression. Functions as a homodimer, which is essential for chromosome partition. Involved in negative DNA supercoiling in vivo, and by this means organize and compact chromosomes. May achieve or facilitate chromosome segregation by condensation DNA from both sides of a centrally located replisome during cell division. This is Chromosome partition protein MukB from Shigella sonnei (strain Ss046).